Reading from the N-terminus, the 189-residue chain is MSQIIDQVQAALQNIDKELEKYPALKELEKQIPVPKSYILLGFVGFYFILIFLNIGGIGQLLSNIAGLVIPGYYSLLALETPGKADDTQYLTYWVVFATLNVFEFWSKAILYWVPFYYLFKTAFLLYIGLPQYGGAELVYKAIVKPLAQKLVNIQPHGGPSDSLKAQAQSAVDAAESHVPQGHSTGVSH.

Residues Met1–Pro35 are Cytoplasmic-facing. Residues Lys36 to Ile55 traverse the membrane as a helical segment. Residues Gly56–Gly57 lie on the Lumenal side of the membrane. A helical transmembrane segment spans residues Ile58 to Ala78. Residues Leu79 to Thr88 lie on the Cytoplasmic side of the membrane. Residues Gln89–Phe105 traverse the membrane as a helical segment. At Trp106–Lys108 the chain is on the lumenal side. Residues Ala109–Tyr127 traverse the membrane as a helical segment. The Cytoplasmic portion of the chain corresponds to Ile128–His189.

It belongs to the DP1 family. As to quaternary structure, oligomer.

It is found in the endoplasmic reticulum membrane. It localises to the golgi apparatus membrane. Its function is as follows. Required to generate and maintain the structure of the tubular endoplasmic reticulum network and the vacuole. Induces high curvature in membranes and causes membrane tubule formation. Involved in membrane/vesicle trafficking. The polypeptide is Protein YOP1 (YOP1) (Yarrowia lipolytica (strain CLIB 122 / E 150) (Yeast)).